We begin with the raw amino-acid sequence, 453 residues long: Plasticin (453 aa).

The head stretch occupies residues 1 to 51 (MSHSTFSHLFSPHFGAPVYSPVSSRIGGRYVSSSVPTRSVDFRSRSSAPAP). Positions 71 to 112 (FATRSNEKRELQELNDRFASFIEKVRHLEQQNSKLILELGQY) are coil 1A. Residues 77-390 (EKRELQELND…KLLEGEENRI (314 aa)) enclose the IF rod domain. The linker 1 stretch occupies residues 113–126 (KDQHQGSTGRINEL). Positions 127-222 (CQQEMRELRR…KMHDEEIQDV (96 aa)) are coil 1B. A linker 12 region spans residues 223–245 (QVSVQSQQMKMEVMETSSRPDLT). Residues 246-391 (GALRDIRAQY…LLEGEENRIV (146 aa)) form a coil 2 region. Residues 392–453 (VPIMKMPSMS…KKDSHGQGKD (62 aa)) are tail. Residues 421–453 (IKTVETRDGEVVKESTKEKGRDEKKDSHGQGKD) are disordered. The span at 424 to 453 (VETRDGEVVKESTKEKGRDEKKDSHGQGKD) shows a compositional bias: basic and acidic residues.

This sequence belongs to the intermediate filament family. As to expression, optic nerve.

In terms of biological role, type III neurofilament. The chain is Plasticin from Carassius auratus (Goldfish).